The sequence spans 191 residues: dTTP/UTP pyrophosphatase (191 aa).

The active-site Proton acceptor is aspartate 71.

The protein belongs to the Maf family. YhdE subfamily. The cofactor is a divalent metal cation.

Its subcellular location is the cytoplasm. The catalysed reaction is dTTP + H2O = dTMP + diphosphate + H(+). It catalyses the reaction UTP + H2O = UMP + diphosphate + H(+). Its function is as follows. Nucleoside triphosphate pyrophosphatase that hydrolyzes dTTP and UTP. May have a dual role in cell division arrest and in preventing the incorporation of modified nucleotides into cellular nucleic acids. This Hyphomonas neptunium (strain ATCC 15444) protein is dTTP/UTP pyrophosphatase.